The primary structure comprises 121 residues: Large ribosomal subunit protein eL31 (121 aa).

This sequence belongs to the eukaryotic ribosomal protein eL31 family.

The chain is Large ribosomal subunit protein eL31 (RPL31) from Panax ginseng (Korean ginseng).